A 220-amino-acid chain; its full sequence is UPF0319 protein YccT (220 aa).

The signal sequence occupies residues 1-20 (MKTGALTTFLALCLPVTVFA).

This sequence belongs to the UPF0319 family.

In Salmonella schwarzengrund (strain CVM19633), this protein is UPF0319 protein YccT.